The sequence spans 262 residues: 5'-nucleotidase SurE (262 aa).

A divalent metal cation contacts are provided by D8, D9, S39, and N95.

The protein belongs to the SurE nucleotidase family. A divalent metal cation serves as cofactor.

Its subcellular location is the cytoplasm. The enzyme catalyses a ribonucleoside 5'-phosphate + H2O = a ribonucleoside + phosphate. In terms of biological role, nucleotidase that shows phosphatase activity on nucleoside 5'-monophosphates. The protein is 5'-nucleotidase SurE of Methanothermobacter thermautotrophicus (strain ATCC 29096 / DSM 1053 / JCM 10044 / NBRC 100330 / Delta H) (Methanobacterium thermoautotrophicum).